Reading from the N-terminus, the 237-residue chain is Small ribosomal subunit protein uS3 (237 aa).

The KH type-2 domain occupies 39–107 (IRAYLMEELK…ETHLNIVEVR (69 aa)). The interval 213–237 (MASERRATESDNQGGSGRERRRENA) is disordered.

Belongs to the universal ribosomal protein uS3 family. In terms of assembly, part of the 30S ribosomal subunit. Forms a tight complex with proteins S10 and S14.

In terms of biological role, binds the lower part of the 30S subunit head. Binds mRNA in the 70S ribosome, positioning it for translation. The protein is Small ribosomal subunit protein uS3 of Rhizobium meliloti (strain 1021) (Ensifer meliloti).